The primary structure comprises 474 residues: 6-phospho-beta-galactosidase (474 aa).

Residues Q19, H116, N159, E160, and N297 each coordinate D-galactose 6-phosphate. E160 (proton donor) is an active-site residue. Catalysis depends on E375, which acts as the Nucleophile. Residues S433, W434, K440, and Y442 each coordinate D-galactose 6-phosphate.

It belongs to the glycosyl hydrolase 1 family.

The catalysed reaction is a 6-phospho-beta-D-galactoside + H2O = D-galactose 6-phosphate + an alcohol. It participates in carbohydrate metabolism; lactose degradation; D-galactose 6-phosphate and beta-D-glucose from lactose 6-phosphate: step 1/1. The polypeptide is 6-phospho-beta-galactosidase (Lacticaseibacillus casei (strain BL23) (Lactobacillus casei)).